Consider the following 758-residue polypeptide: 5-methyltetrahydropteroyltriglutamate--homocysteine methyltransferase (758 aa).

5-methyltetrahydropteroyltri-L-glutamate-binding positions include 16-19 and Lys-112; that span reads RELK. L-homocysteine contacts are provided by residues 433 to 435 and Glu-486; that span reads IGS. L-methionine is bound by residues 433–435 and Glu-486; that span reads IGS. 5-methyltetrahydropteroyltri-L-glutamate contacts are provided by residues 517-518 and Trp-563; that span reads RC. Residue Asp-601 participates in L-homocysteine binding. Position 601 (Asp-601) interacts with L-methionine. Glu-607 contacts 5-methyltetrahydropteroyltri-L-glutamate. Residues His-643, Cys-645, and Glu-667 each coordinate Zn(2+). His-696 functions as the Proton donor in the catalytic mechanism. Cys-728 serves as a coordination point for Zn(2+).

This sequence belongs to the vitamin-B12 independent methionine synthase family. It depends on Zn(2+) as a cofactor.

The enzyme catalyses 5-methyltetrahydropteroyltri-L-glutamate + L-homocysteine = tetrahydropteroyltri-L-glutamate + L-methionine. It participates in amino-acid biosynthesis; L-methionine biosynthesis via de novo pathway; L-methionine from L-homocysteine (MetE route): step 1/1. Catalyzes the transfer of a methyl group from 5-methyltetrahydrofolate to homocysteine resulting in methionine formation. This is 5-methyltetrahydropteroyltriglutamate--homocysteine methyltransferase from Neisseria gonorrhoeae (strain ATCC 700825 / FA 1090).